The sequence spans 705 residues: Elongation factor G (705 aa).

The region spanning 8–294 (NLYRNFGIMA…AVIDYLPSPL (287 aa)) is the tr-type G domain. Residues 17–24 (AHIDAGKT), 92–96 (DTPGH), and 146–149 (NKMD) contribute to the GTP site.

This sequence belongs to the TRAFAC class translation factor GTPase superfamily. Classic translation factor GTPase family. EF-G/EF-2 subfamily.

It is found in the cytoplasm. Functionally, catalyzes the GTP-dependent ribosomal translocation step during translation elongation. During this step, the ribosome changes from the pre-translocational (PRE) to the post-translocational (POST) state as the newly formed A-site-bound peptidyl-tRNA and P-site-bound deacylated tRNA move to the P and E sites, respectively. Catalyzes the coordinated movement of the two tRNA molecules, the mRNA and conformational changes in the ribosome. The polypeptide is Elongation factor G (Ruegeria pomeroyi (strain ATCC 700808 / DSM 15171 / DSS-3) (Silicibacter pomeroyi)).